We begin with the raw amino-acid sequence, 66 residues long: Beta-toxin Ct71 (66 aa).

An LCN-type CS-alpha/beta domain is found at 1–66; that stretch reads KEGYIVNYHD…VWPLPKKTCN (66 aa). Disulfide bonds link Cys-12–Cys-65, Cys-16–Cys-41, Cys-25–Cys-46, and Cys-29–Cys-48. At Asn-66 the chain carries Asparagine amide.

The protein belongs to the long (4 C-C) scorpion toxin superfamily. Sodium channel inhibitor family. Beta subfamily. As to expression, expressed by the venom gland.

It is found in the secreted. Functionally, beta toxins bind voltage-independently at site-4 of sodium channels (Nav) and shift the voltage of activation toward more negative potentials thereby affecting sodium channel activation and promoting spontaneous and repetitive firing. Lethal to mice. This chain is Beta-toxin Ct71, found in Centruroides tecomanus (Scorpion).